Reading from the N-terminus, the 408-residue chain is Ribosomal RNA large subunit methyltransferase DR_0049 (408 aa).

This sequence belongs to the methyltransferase superfamily.

The enzyme catalyses cytidine(2499) in 23S rRNA + S-adenosyl-L-methionine = 5-methylcytidine(2499) in 23S rRNA + S-adenosyl-L-homocysteine + H(+). Specifically methylates the cytosine at position 2499 (m5C2499) of 23S rRNA. In Deinococcus radiodurans (strain ATCC 13939 / DSM 20539 / JCM 16871 / CCUG 27074 / LMG 4051 / NBRC 15346 / NCIMB 9279 / VKM B-1422 / R1), this protein is Ribosomal RNA large subunit methyltransferase DR_0049.